The sequence spans 148 residues: Deoxyuridine 5'-triphosphate nucleotidohydrolase (148 aa).

Residues 67–69 (RSG), asparagine 80, 84–86 (TID), and lysine 94 contribute to the substrate site.

The protein belongs to the dUTPase family. Mg(2+) serves as cofactor.

It catalyses the reaction dUTP + H2O = dUMP + diphosphate + H(+). The protein operates within pyrimidine metabolism; dUMP biosynthesis; dUMP from dCTP (dUTP route): step 2/2. Its function is as follows. This enzyme is involved in nucleotide metabolism: it produces dUMP, the immediate precursor of thymidine nucleotides and it decreases the intracellular concentration of dUTP so that uracil cannot be incorporated into DNA. The protein is Deoxyuridine 5'-triphosphate nucleotidohydrolase of Orientia tsutsugamushi (strain Ikeda) (Rickettsia tsutsugamushi).